The chain runs to 382 residues: PPE family protein PPE44 (382 aa).

It belongs to the mycobacterial PPE family.

It is found in the secreted. Its subcellular location is the cell wall. It localises to the cell surface. Virulence factor that modulates host innate immune response. This chain is PPE family protein PPE44, found in Mycobacterium tuberculosis (strain CDC 1551 / Oshkosh).